A 208-amino-acid polypeptide reads, in one-letter code: Uracil phosphoribosyltransferase (208 aa).

5-phospho-alpha-D-ribose 1-diphosphate contacts are provided by residues arginine 78, arginine 103, and 130–138; that span reads DPMLATGGS. Uracil contacts are provided by residues isoleucine 193 and 198–200; that span reads GDA. Aspartate 199 is a 5-phospho-alpha-D-ribose 1-diphosphate binding site.

Belongs to the UPRTase family. It depends on Mg(2+) as a cofactor.

The enzyme catalyses UMP + diphosphate = 5-phospho-alpha-D-ribose 1-diphosphate + uracil. Its pathway is pyrimidine metabolism; UMP biosynthesis via salvage pathway; UMP from uracil: step 1/1. Its activity is regulated as follows. Allosterically activated by GTP. Functionally, catalyzes the conversion of uracil and 5-phospho-alpha-D-ribose 1-diphosphate (PRPP) to UMP and diphosphate. This Yersinia pestis protein is Uracil phosphoribosyltransferase.